A 294-amino-acid polypeptide reads, in one-letter code: tRNA pseudouridine synthase B (294 aa).

The active-site Nucleophile is the Asp39.

Belongs to the pseudouridine synthase TruB family. Type 1 subfamily.

It carries out the reaction uridine(55) in tRNA = pseudouridine(55) in tRNA. Its function is as follows. Responsible for synthesis of pseudouridine from uracil-55 in the psi GC loop of transfer RNAs. The sequence is that of tRNA pseudouridine synthase B from Streptococcus pyogenes serotype M6 (strain ATCC BAA-946 / MGAS10394).